Reading from the N-terminus, the 166-residue chain is Podoplanin (166 aa).

Positions 1–22 are cleaved as a signal peptide; sequence MWTAPVLLWVLGSVWFWDSAQG. Topologically, residues 23 to 135 are extracellular; it reads GAIGALEDDL…KKDGLAVVTL (113 aa). Residues T34, T52, T55, and T56 are each glycosylated (O-linked (GalNAc...) threonine). Residues 54–63 are compositionally biased toward basic and acidic residues; that stretch reads DTTGELDKST. A disordered region spans residues 54–124; that stretch reads DTTGELDKST…DNAGGETQTT (71 aa). A glycan (O-linked (GalNAc...) serine) is linked at S62. Residues T63, T71, and T80 are each glycosylated (O-linked (GalNAc...) threonine). A glycan (O-linked (GalNAc...) serine) is linked at S81. T83 carries an O-linked (GalNAc...) threonine glycan. S84 carries O-linked (GalNAc...) serine glycosylation. Basic and acidic residues predominate over residues 84–93; the sequence is SDHDHKEHES. 7 O-linked (GalNAc...) threonine glycosylation sites follow: T94, T95, T96, T101, T105, T109, and T110. The segment covering 94–103 has biased composition (polar residues); sequence TTTVKAVTSH. Positions 104–114 are enriched in basic and acidic residues; that stretch reads STDKKTTHPNR. Residues 136–156 traverse the membrane as a helical segment; that stretch reads VGIIIGVLLAIGFIGGIIIVV. The requires for dimerization and lipid rafts association stretch occupies residues 137 to 141; it reads GIIIG. Over 157–166 the chain is Cytoplasmic; it reads MRKISGRFSP. The segment at 158 to 159 is requires for interaction with MSN and EZR; the sequence is RK.

This sequence belongs to the podoplanin family. As to quaternary structure, homodimer. Interacts with CLEC1B; the interaction is independent of CLEC1B glycosylation and activates CLEC1B; the interaction is dependent of sialic acid on O-glycans. Interacts with CD9; this interaction is homophilic and attenuates platelet aggregation and pulmonary metastasis induced by PDPN. Interacts with LGALS8; the interaction is glycosylation-dependent; may participate in connection of the lymphatic endothelium to the surrounding extracellular matrix. Interacts with HSPA9. Interacts (via extracellular domain) with CD44; this interaction is required for PDPN-mediated directional migration and regulation of lamellipodia extension/stabilization during cell spreading and migration. Interacts (via cytoplasmic domain) with MSN and EZR; activates RHOA and promotes epithelial-mesenchymal transition. Interacts with CCL21; relocalized PDPN to the basolateral membrane. Post-translationally, extensively O-glycosylated. Contains sialic acid residues. O-glycosylation is necessary for platelet aggregation activity. Disialylated at Thr-52; sialic acid is critical for platelet-aggregating activity and for CLEC1B interaction. In terms of processing, the N-terminus is blocked. In terms of tissue distribution, in adult kidney, expressed on the urinary surface and foot processes of podocytes and in parietal epithelial cells of Bowman's capsule where it is localized to luminal surfaces. In lung, expressed exclusively on luminal surfaces of type I alveolar epithelial cells and pleural mesothelial cells. Not expressed in type II alveolar cells. In bone, expressed in osteocytes and osteoblasts. In spleen, liver, stomach and intestine, expressed in mesoepithelium. Also expressed in thymic epithelial cells, choroid plexus and leptomeninges.

Its subcellular location is the membrane. The protein localises to the cell projection. The protein resides in the lamellipodium membrane. It localises to the filopodium membrane. It is found in the microvillus membrane. Its subcellular location is the ruffle membrane. The protein localises to the membrane raft. The protein resides in the apical cell membrane. It localises to the basolateral cell membrane. It is found in the invadopodium. Its function is as follows. Mediates effects on cell migration and adhesion through its different partners. During development plays a role in blood and lymphatic vessels separation by binding CLEC1B, triggering CLEC1B activation in platelets and leading to platelet activation and/or aggregation. Interaction with CD9, on the contrary, attenuates platelet aggregation and pulmonary metastasis induced by PDPN. Mediates effects on cell migration and adhesion through its different partners. Through MSN or EZR interaction promotes epithelial-mesenchymal transition (EMT) leading to ERZ phosphorylation and triggering RHOA activation leading to cell migration increase and invasiveness. Interaction with CD44 promotes directional cell migration in epithelial and tumor cells. In lymph nodes (LNs), controls fibroblastic reticular cells (FRCs) adhesion to the extracellular matrix (ECM) and contraction of the actomyosin by maintaining ERM proteins (EZR; MSN and RDX) and MYL9 activation through association with unknown transmembrane proteins. Engagement of CLEC1B by PDPN promotes FRCs relaxation by blocking lateral membrane interactions leading to reduction of ERM proteins (EZR; MSN and RDX) and MYL9 activation. Through binding with LGALS8 may participate in connection of the lymphatic endothelium to the surrounding extracellular matrix. In keratinocytes, induces changes in cell morphology showing an elongated shape, numerous membrane protrusions, major reorganization of the actin cytoskeleton, increased motility and decreased cell adhesion. Controls invadopodia stability and maturation leading to efficient degradation of the extracellular matrix (ECM) in tumor cells through modulation of RHOC activity in order to activate ROCK1/ROCK2 and LIMK1/LIMK2 and inactivation of CFL1. Required for normal lung cell proliferation and alveolus formation at birth. Does not function as a water channel or as a regulator of aquaporin-type water channels. Does not have any effect on folic acid or amino acid transport. This Rattus norvegicus (Rat) protein is Podoplanin.